The following is a 23-amino-acid chain: FLPLVRGAAKLIPSVVCAISKRC.

Cys17 and Cys23 are oxidised to a cystine.

Expressed by the skin glands.

It localises to the secreted. In terms of biological role, mast cell degranulating peptide. Causes histamine release from rat peritoneal mast cells in vitro. Has antibacterial activity against the Gram-negative bacterium E.coli K12 and Gram-positive bacterium M.luteus NCT C2665. This chain is Brevinin-1SE, found in Lithobates sevosus (Dusky gopher frog).